The following is a 98-amino-acid chain: NADH-ubiquinone oxidoreductase chain 4L (98 aa).

Helical transmembrane passes span 2-22 (PSIS…MLIF), 29-49 (SLLC…LTIL), and 61-81 (ILLL…LVTV).

It belongs to the complex I subunit 4L family. As to quaternary structure, core subunit of respiratory chain NADH dehydrogenase (Complex I) which is composed of 45 different subunits.

It is found in the mitochondrion inner membrane. The enzyme catalyses a ubiquinone + NADH + 5 H(+)(in) = a ubiquinol + NAD(+) + 4 H(+)(out). Its function is as follows. Core subunit of the mitochondrial membrane respiratory chain NADH dehydrogenase (Complex I) which catalyzes electron transfer from NADH through the respiratory chain, using ubiquinone as an electron acceptor. Part of the enzyme membrane arm which is embedded in the lipid bilayer and involved in proton translocation. The chain is NADH-ubiquinone oxidoreductase chain 4L (MT-ND4L) from Lemur catta (Ring-tailed lemur).